Reading from the N-terminus, the 345-residue chain is Dihydroorotate dehydrogenase (quinone) (345 aa).

FMN-binding positions include 65 to 69 and T89; that span reads AGLDK. Substrate is bound at residue K69. 114–118 serves as a coordination point for substrate; that stretch reads NRMGF. Residues N142 and N175 each coordinate FMN. Residue N175 participates in substrate binding. Residue S178 is the Nucleophile of the active site. Residue N180 participates in substrate binding. Residues K220 and T248 each contribute to the FMN site. Substrate is bound at residue 249–250; sequence NT. FMN is bound by residues G271, G300, and 321–322; that span reads YT.

The protein belongs to the dihydroorotate dehydrogenase family. Type 2 subfamily. Monomer. The cofactor is FMN.

Its subcellular location is the cell membrane. The catalysed reaction is (S)-dihydroorotate + a quinone = orotate + a quinol. The protein operates within pyrimidine metabolism; UMP biosynthesis via de novo pathway; orotate from (S)-dihydroorotate (quinone route): step 1/1. Functionally, catalyzes the conversion of dihydroorotate to orotate with quinone as electron acceptor. The chain is Dihydroorotate dehydrogenase (quinone) from Burkholderia cenocepacia (strain ATCC BAA-245 / DSM 16553 / LMG 16656 / NCTC 13227 / J2315 / CF5610) (Burkholderia cepacia (strain J2315)).